Reading from the N-terminus, the 38-residue chain is Large ribosomal subunit protein bL12 (38 aa).

This sequence belongs to the bacterial ribosomal protein bL12 family. In terms of assembly, homodimer. Part of the ribosomal stalk of the 50S ribosomal subunit. Forms a multimeric L10(L12)X complex, where L10 forms an elongated spine to which 2 to 4 L12 dimers bind in a sequential fashion. Binds GTP-bound translation factors.

In terms of biological role, forms part of the ribosomal stalk which helps the ribosome interact with GTP-bound translation factors. Is thus essential for accurate translation. The protein is Large ribosomal subunit protein bL12 (rplL) of Salinivibrio costicola (Vibrio costicola).